Consider the following 921-residue polypeptide: Sodium/calcium exchanger 2 (921 aa).

A signal peptide spans 1–20 (MAPLALMGVVLLLGVPHCLG). The interval 23 to 42 (TPTPSLPPPTANDSDASPEG) is disordered. The chain crosses the membrane as a helical span at residues 69-89 (VARAVVYFVAMVYMFLGVSII). N-linked (GlcNAc...) asparagine glycosylation is found at N125 and N130. 4 consecutive transmembrane segments (helical) span residues 131 to 151 (LTLM…IEVC), 165 to 185 (IVGS…YVIP), 197 to 217 (VFFV…LILA), and 226 to 246 (VWEA…AWMA). The interval 248–267 (KRLLFYKYVYKRYRTDPRSG) is putative calmodulin-binding region. The tract at residues 371–391 (HAADAARRPGATDGAPDDEDD) is disordered. Calx-beta domains are found at residues 389-482 (EDDG…FVRL) and 512-611 (ATVT…FIEL). E407, D443, D468, D469, I471, E473, E476, D518, D519, D520, E536, D598, E599, and E600 together coordinate Ca(2+). S622 is modified (phosphoserine). E665 contacts Ca(2+). Transmembrane regions (helical) follow at residues 721 to 741 (CFDY…ACVP), 749 to 769 (WACF…IGDL), 786 to 806 (VVFV…VAAL), 823 to 843 (AVNV…YWAV), 855 to 875 (LAFS…VLLY), and 893 to 913 (LATT…SSLE).

This sequence belongs to the Ca(2+):cation antiporter (CaCA) (TC 2.A.19) family. SLC8 subfamily. In terms of tissue distribution, detected in kidney cortex, in distal convoluted tubules and connecting segments. Detected in brain and spinal cord (at protein level). Detected in brain, especially in hippocampus CA1, CA2 and CA3 fiels, dentate gyrus, cerebellum and brain cortex.

The protein resides in the cell membrane. Its subcellular location is the basolateral cell membrane. The catalysed reaction is Ca(2+)(in) + 3 Na(+)(out) = Ca(2+)(out) + 3 Na(+)(in). With respect to regulation, calcium transport is down-regulated by Na(+) and stimulated by Ca(2+). Mediates the electrogenic exchange of Ca(2+) against Na(+) ions across the cell membrane, and thereby contributes to the regulation of cytoplasmic Ca(2+) levels and Ca(2+)-dependent cellular processes. Contributes to cellular Ca(2+) homeostasis in excitable cells. Contributes to the rapid decrease of cytoplasmic Ca(2+) levels back to baseline after neuronal activation, and thereby contributes to modulate synaptic plasticity, learning and memory. Plays a role in regulating urinary Ca(2+) and Na(+) excretion. The polypeptide is Sodium/calcium exchanger 2 (Mus musculus (Mouse)).